The following is a 150-amino-acid chain: 2-aminobenzenesulfonate 2,3-dioxygenase subunit beta (150 aa).

The protein belongs to the bacterial ring-hydroxylating dioxygenase beta subunit family. In terms of assembly, heterotetramer with a alpha2beta2 structure.

It carries out the reaction 2-aminobenzenesulfonate + NADH + O2 + 2 H(+) = 2,3-dihydroxybenzenesulfonate + NH4(+) + NAD(+). Inhibited by o-phenanthroline. In terms of biological role, beta subunit of the oxygenase component of the 2-aminobenzenesulfonate 2,3-dioxygenase system (deaminating) (ABSDOS). Can use 2-aminobenzenesulfonate (ABS), benzenesulfonate (BS), 4-toluenesulfonate (TS), 2-nitrobenzenesulfonate, 3- and 4-aminobenzenesulfonates, 4-chloro- and 4-hydroxybenzenesulfonates and pyridine-3-sulfonate as substrates. No desulfonation of ABS to aminocatechol or aminophenol detected. The protein is 2-aminobenzenesulfonate 2,3-dioxygenase subunit beta of Alcaligenes sp.